A 269-amino-acid chain; its full sequence is Expansin-B11 (269 aa).

The N-terminal stretch at 1-30 (MTVVSIMWSLVQVQVLVAVALAFLVGGAWC) is a signal peptide. Residue Asn40 is glycosylated (N-linked (GlcNAc...) asparagine). The 107-residue stretch at 69–175 (GGGCGYKDVN…RRVKCKYGSK (107 aa)) folds into the Expansin-like EG45 domain. Intrachain disulfides connect Cys72-Cys100, Cys103-Cys170, and Cys108-Cys114. Positions 187–268 (NYLALLVKYV…GWKPNTAYTA (82 aa)) constitute an Expansin-like CBD domain.

This sequence belongs to the expansin family. Expansin B subfamily. Expressed in pollen.

The protein localises to the secreted. Its subcellular location is the cell wall. The protein resides in the membrane. Its function is as follows. May aid fertilization by loosening the cell wall of the stigma and style, thereby facilitating penetration of the pollen tube. Acts selectively on grass cell walls, which are relatively poor in pectins and xyloglucans and rich in glucuronoarabinoxylans and (1-3),(1-4)-beta-D-glucans, when compared with cell walls of other angiosperms, including other monocots. In Zea mays (Maize), this protein is Expansin-B11 (EXPB11).